The primary structure comprises 604 residues: NRPS-independent siderophore synthetase-like protein ankE (604 aa).

It catalyses the reaction cyclo(L-arginyl-(Z)-dehydro-4-O-homoseryl-tyrosyl) + citrate + ATP = NK13650 B + AMP + diphosphate + H(+). Its pathway is secondary metabolite biosynthesis. In terms of biological role, NRPS-independent siderophore synthetase-like protein; part of the ank cluster that mediates the biosynthesis of NK13650 C, a highly modified cyclo-arginine-tyrosine dipeptide. AnkE is responsible of the production of NK13650 B via ligation of citrate to the ankD product. Within the pathway, the cyclodipeptide synthase ankA acts as the scaffold-generating enzyme and is responsible for formation of the cyclo-Arg-Tyr diketopiperazine (cRY) from L-Arg and L-Tyr. The ankA product cRY is desaturated by the cytochrome P450 monooxygenase ankB to yield a dehydro-cyclodipeptide intermediate. The FAD-dependent monooxygenase ankC then installs the m-OH, ankD catalyzes the attachment of L-homoserine, and ankE ligates citrate to the ankD product to yield NK13650 B. The O-methyltransferase ankF is responsible for methylation of the C-17 phenol group of NK13650 B to produce NK13650 D. Amidation of NK13650 D with L-Asp by ankG then leads to the production of NK13650 C, whereas amidation of NK13650 B produces NK13650 A. The polypeptide is NRPS-independent siderophore synthetase-like protein ankE (Aspergillus thermomutatus (Neosartorya pseudofischeri)).